A 192-amino-acid polypeptide reads, in one-letter code: Archaemetzincin (192 aa).

Histidine 137 is a Zn(2+) binding site. The Proton acceptor role is filled by glutamate 138. Residues histidine 141, histidine 147, cysteine 148, cysteine 153, cysteine 172, and cysteine 175 each coordinate Zn(2+).

This sequence belongs to the peptidase M54 family. In terms of assembly, monomer. Zn(2+) is required as a cofactor.

Probable zinc metalloprotease whose natural substrate is unknown. The chain is Archaemetzincin from Pyrococcus furiosus (strain ATCC 43587 / DSM 3638 / JCM 8422 / Vc1).